The following is a 596-amino-acid chain: Elongation factor 4 (596 aa).

The 182-residue stretch at 2 to 183 (ENIRNFSIIA…AIIERIPAPS (182 aa)) folds into the tr-type G domain. GTP contacts are provided by residues 14-19 (DHGKST) and 130-133 (NKID).

It belongs to the TRAFAC class translation factor GTPase superfamily. Classic translation factor GTPase family. LepA subfamily.

It is found in the cell inner membrane. The catalysed reaction is GTP + H2O = GDP + phosphate + H(+). In terms of biological role, required for accurate and efficient protein synthesis under certain stress conditions. May act as a fidelity factor of the translation reaction, by catalyzing a one-codon backward translocation of tRNAs on improperly translocated ribosomes. Back-translocation proceeds from a post-translocation (POST) complex to a pre-translocation (PRE) complex, thus giving elongation factor G a second chance to translocate the tRNAs correctly. Binds to ribosomes in a GTP-dependent manner. The chain is Elongation factor 4 from Nitratiruptor sp. (strain SB155-2).